The chain runs to 72 residues: Rubredoxin (72 aa).

The Rubredoxin-like domain maps to 19–72 (DAVLECKICWQRYDPAEGDPVWQIPPGTPFAALPAHWRCPRCDGDREQFMVVDG). Positions 24, 27, 57, and 60 each coordinate Fe cation.

It belongs to the rubredoxin family. Requires Fe(3+) as cofactor.

Rubredoxin is a small nonheme, iron protein lacking acid-labile sulfide. Its single Fe, chelated to 4 Cys, functions as an electron acceptor and may also stabilize the conformation of the molecule. Could be involved in hydrogenase-linked redox processes. This chain is Rubredoxin (hoxR), found in Azotobacter vinelandii.